Here is a 223-residue protein sequence, read N- to C-terminus: Noggin (223 aa).

Residues 1–26 form the signal peptide; it reads MDPPRLRVATYLLLLSVGLLLHGGAC. Asparagine 61 is a glycosylation site (N-linked (GlcNAc...) asparagine). 4 disulfides stabilise this stretch: cysteine 143–cysteine 180, cysteine 166–cysteine 217, cysteine 172–cysteine 219, and cysteine 195–cysteine 204.

The protein belongs to the noggin family. Homodimer.

It localises to the secreted. Inhibitor of bone morphogenetic proteins (BMP) signaling. The protein is Noggin (nog) of Takifugu rubripes (Japanese pufferfish).